Reading from the N-terminus, the 340-residue chain is Phosphoribosylformylglycinamidine cyclo-ligase (340 aa).

The protein belongs to the AIR synthase family.

It is found in the cytoplasm. The enzyme catalyses 2-formamido-N(1)-(5-O-phospho-beta-D-ribosyl)acetamidine + ATP = 5-amino-1-(5-phospho-beta-D-ribosyl)imidazole + ADP + phosphate + H(+). The protein operates within purine metabolism; IMP biosynthesis via de novo pathway; 5-amino-1-(5-phospho-D-ribosyl)imidazole from N(2)-formyl-N(1)-(5-phospho-D-ribosyl)glycinamide: step 2/2. The chain is Phosphoribosylformylglycinamidine cyclo-ligase from Macrococcus caseolyticus (strain JCSC5402) (Macrococcoides caseolyticum).